Here is a 500-residue protein sequence, read N- to C-terminus: Protein FAM83F (500 aa).

Ala2 carries the N-acetylalanine modification. Residues 2–300 (AESQLNCLDE…LYAISEEVDL (299 aa)) are DUF1669. Phosphoserine is present on Ser4. 3 disordered regions span residues 82 to 109 (NARG…AYWP), 347 to 366 (QQRE…SGGE), and 391 to 500 (IPLG…CVIS). The span at 397 to 419 (SQKDGRMVSHMHRDLKPKSREAP) shows a compositional bias: basic and acidic residues. Low complexity-rich tracts occupy residues 425–442 (GEAA…SSRL) and 458–468 (SSVSTETSEVE). The segment covering 477-500 (ENSSADISGKTSPSSAKPSNCVIS) has biased composition (polar residues). Position 479 is a phosphoserine (Ser479).

The protein belongs to the FAM83 family. Directly interacts (via DUF1669) with CSNK1A1 and CSNK1A1L.

The protein resides in the cell membrane. The chain is Protein FAM83F (FAM83F) from Homo sapiens (Human).